The primary structure comprises 451 residues: Probable asparagine--tRNA ligase, cytoplasmic (451 aa).

Belongs to the class-II aminoacyl-tRNA synthetase family.

Its subcellular location is the cytoplasm. It carries out the reaction tRNA(Asn) + L-asparagine + ATP = L-asparaginyl-tRNA(Asn) + AMP + diphosphate + H(+). The protein is Probable asparagine--tRNA ligase, cytoplasmic of Encephalitozoon cuniculi (strain GB-M1) (Microsporidian parasite).